We begin with the raw amino-acid sequence, 201 residues long: Large ribosomal subunit protein bL12m (201 aa).

A mitochondrion-targeting transit peptide spans 1–38; that stretch reads MLPVAASRCLWGPRLGLRGAALRLARQQMPSVCAARQL. 2 disordered regions span residues 37-60 and 109-130; these read QLRS…APKE and VSAA…QKER. An N6-acetyllysine mark is found at lysine 128, lysine 141, lysine 145, and lysine 147. An N6-acetyllysine; alternate modification is found at lysine 153. The residue at position 153 (lysine 153) is an N6-succinyllysine; alternate. Lysine 153 participates in a covalent cross-link: Glycyl lysine isopeptide (Lys-Gly) (interchain with G-Cter in ubiquitin). Lysine 165 carries the N6-succinyllysine modification. Residues lysine 166 and lysine 176 each carry the N6-acetyllysine modification. At lysine 181 the chain carries N6-acetyllysine; alternate. An N6-succinyllysine; alternate modification is found at lysine 181. Lysine 188 bears the N6-acetyllysine mark.

This sequence belongs to the bacterial ribosomal protein bL12 family. Component of the mitochondrial ribosome large subunit (39S) which comprises a 16S rRNA and about 50 distinct proteins. Interacts with NOA1. Two mature forms are produced by differential two-step proteolytic cleavage. Cleaved by the mitochondrial processing protease to produce the long mature form and subsequently by the mitochondrial intermediate protease to produce the short mature form. Post-translationally, in the presence of CUL3, undergoes 'Lys-63'-linked ubiquitination at Lys-153 which results in proteasomal degradation.

It is found in the mitochondrion matrix. In terms of biological role, as a component of the mitochondrial large ribosomal subunit, plays a role in mitochondrial translation. When present in mitochondria as a free protein not associated with the ribosome, associates with mitochondrial RNA polymerase POLRMT to activate transcription. Required for POLRMT stability. This Mus musculus (Mouse) protein is Large ribosomal subunit protein bL12m (Mrpl12).